We begin with the raw amino-acid sequence, 88 residues long: UPF0473 protein CLL_A1177 (88 aa).

The protein belongs to the UPF0473 family.

The protein is UPF0473 protein CLL_A1177 of Clostridium botulinum (strain Eklund 17B / Type B).